A 338-amino-acid polypeptide reads, in one-letter code: MIHLAGFTCCLGGVALYLLTRSTGRDIKSITRVYQLKDLEQLVEVESKVVPLIIAVSGDVGSETPIKCEHSYVLGVFLKRTAEQQVLRRNWRFSWVRNSTLMQPMTKEVPWYLDDGTGRVNVDVSQGELGLALTVGSDVFEKAEPVSLVQGALGYLKGFKILGVRHVERVVPIGTPLTVVGEAVRDGMGNVRIQKPEQGPFYVTYIPLDQLISKLGDLSRRFKYASMGLTVLGVILISKPVIEYILKRIEDTLERRRRQFALKRVVDAAARRAKPVTGGGTSRDGDTPDLCVVCLDQKYNTAFVECGHMCCCTPCSLQLRTCPLCRERIQQVLKIYRH.

The chain crosses the membrane as a helical span at residues methionine 1 to arginine 21. At serine 22–lysine 223 the chain is on the chloroplast intermembrane side. A helical transmembrane segment spans residues tyrosine 224 to leucine 246. Over lysine 247–histidine 338 the chain is Cytoplasmic. The segment at cysteine 291 to arginine 326 adopts an RING-type zinc-finger fold.

It is found in the plastid. The protein resides in the chloroplast outer membrane. The enzyme catalyses S-ubiquitinyl-[E2 ubiquitin-conjugating enzyme]-L-cysteine + [acceptor protein]-L-lysine = [E2 ubiquitin-conjugating enzyme]-L-cysteine + N(6)-ubiquitinyl-[acceptor protein]-L-lysine.. It functions in the pathway protein modification; protein ubiquitination. Its function is as follows. Possesses E3 ubiquitin-protein ligase activity. This Arabidopsis thaliana (Mouse-ear cress) protein is E3 ubiquitin-protein ligase SPL1.